The sequence spans 159 residues: 6,7-dimethyl-8-ribityllumazine synthase (159 aa).

5-amino-6-(D-ribitylamino)uracil is bound by residues tryptophan 26, 58–60 (AIE), and 80–82 (VVI). (2S)-2-hydroxy-3-oxobutyl phosphate is bound at residue 85 to 86 (ET). The Proton donor role is filled by histidine 88. Asparagine 113 contributes to the 5-amino-6-(D-ribitylamino)uracil binding site. Position 127 (arginine 127) interacts with (2S)-2-hydroxy-3-oxobutyl phosphate.

Belongs to the DMRL synthase family. Homopentamer.

The enzyme catalyses (2S)-2-hydroxy-3-oxobutyl phosphate + 5-amino-6-(D-ribitylamino)uracil = 6,7-dimethyl-8-(1-D-ribityl)lumazine + phosphate + 2 H2O + H(+). It participates in cofactor biosynthesis; riboflavin biosynthesis; riboflavin from 2-hydroxy-3-oxobutyl phosphate and 5-amino-6-(D-ribitylamino)uracil: step 1/2. Functionally, catalyzes the formation of 6,7-dimethyl-8-ribityllumazine by condensation of 5-amino-6-(D-ribitylamino)uracil with 3,4-dihydroxy-2-butanone 4-phosphate. This is the penultimate step in the biosynthesis of riboflavin. This is 6,7-dimethyl-8-ribityllumazine synthase from Mycolicibacterium gilvum (strain PYR-GCK) (Mycobacterium gilvum (strain PYR-GCK)).